A 274-amino-acid chain; its full sequence is 2,3,4,5-tetrahydropyridine-2,6-dicarboxylate N-succinyltransferase (274 aa).

Residues Arg104 and Asp141 each contribute to the substrate site.

Belongs to the transferase hexapeptide repeat family. Homotrimer.

The protein localises to the cytoplasm. It carries out the reaction (S)-2,3,4,5-tetrahydrodipicolinate + succinyl-CoA + H2O = (S)-2-succinylamino-6-oxoheptanedioate + CoA. It functions in the pathway amino-acid biosynthesis; L-lysine biosynthesis via DAP pathway; LL-2,6-diaminopimelate from (S)-tetrahydrodipicolinate (succinylase route): step 1/3. In Escherichia coli O157:H7, this protein is 2,3,4,5-tetrahydropyridine-2,6-dicarboxylate N-succinyltransferase (dapD).